A 406-amino-acid polypeptide reads, in one-letter code: LIM/homeobox protein Lhx1 (406 aa).

LIM zinc-binding domains are found at residues 4–54 (CAGC…CKND) and 63–117 (CAGC…CKED). Disordered regions lie at residues 128 to 189 (NSLH…TIKA) and 293 to 374 (YDFF…EVFG). Residues 137 to 148 (SDPSLSPDSQDP) are compositionally biased toward low complexity. The segment covering 151–167 (DDAKDSESANVSDKEGG) has biased composition (basic and acidic residues). Ser162 is modified (phosphoserine). The homeobox DNA-binding region spans 180–239 (RRGPRTTIKAKQLETLKAAFAATPKPTRHIREQLAQETGLNMRVIQVWFQNRRSKERRMK). Over residues 315-327 (PSSGPSGTPLGGL) the composition is skewed to low complexity. The span at 352–362 (GDSPSPEPSLP) shows a compositional bias: pro residues.

As to quaternary structure, interacts with LDB1 via the tandem LIM domains.

The protein resides in the nucleus. Its function is as follows. Potential transcription factor. May play a role in early mesoderm formation and later in lateral mesoderm differentiation and neurogenesis. The protein is LIM/homeobox protein Lhx1 (LHX1) of Saimiri boliviensis boliviensis (Bolivian squirrel monkey).